A 229-amino-acid polypeptide reads, in one-letter code: Uracil-DNA glycosylase (229 aa).

The Proton acceptor role is filled by Asp-64.

This sequence belongs to the uracil-DNA glycosylase (UDG) superfamily. UNG family.

It is found in the cytoplasm. It catalyses the reaction Hydrolyzes single-stranded DNA or mismatched double-stranded DNA and polynucleotides, releasing free uracil.. Excises uracil residues from the DNA which can arise as a result of misincorporation of dUMP residues by DNA polymerase or due to deamination of cytosine. The sequence is that of Uracil-DNA glycosylase from Escherichia coli (strain 55989 / EAEC).